The chain runs to 436 residues: RNA polymerase sigma-54 factor (436 aa).

Positions 324–343 (TLREVADCLSLHESTVSRAI) form a DNA-binding region, H-T-H motif. The RPON box motif lies at 413–421 (SRRTVAKYR).

The protein belongs to the sigma-54 factor family. As to quaternary structure, interacts transiently with the RNAP core.

Its function is as follows. Sigma factors are initiation factors that promote the attachment of RNA polymerase (RNAP) to specific initiation sites and are then released. This sigma factor is responsible for the expression of the levanase operon. The open complex (sigma-54 and core RNA polymerase) serves as the receptor for receipt of the melting signal from the remotely bound activator protein LevR for the expression of the levanase operon. Associates with the RNAP core only in stationary phase cells. This Bacillus subtilis (strain 168) protein is RNA polymerase sigma-54 factor (sigL).